The primary structure comprises 257 residues: Acetylglutamate kinase (257 aa).

Residues 43–44, arginine 65, and asparagine 157 contribute to the substrate site; that span reads GG.

Belongs to the acetylglutamate kinase family. ArgB subfamily.

The protein resides in the cytoplasm. The catalysed reaction is N-acetyl-L-glutamate + ATP = N-acetyl-L-glutamyl 5-phosphate + ADP. Its pathway is amino-acid biosynthesis; L-arginine biosynthesis; N(2)-acetyl-L-ornithine from L-glutamate: step 2/4. In terms of biological role, catalyzes the ATP-dependent phosphorylation of N-acetyl-L-glutamate. This Mannheimia succiniciproducens (strain KCTC 0769BP / MBEL55E) protein is Acetylglutamate kinase.